Reading from the N-terminus, the 104-residue chain is Large ribosomal subunit protein eL36 (104 aa).

The protein belongs to the eukaryotic ribosomal protein eL36 family.

This is Large ribosomal subunit protein eL36 (RPL36) from Tetrahymena thermophila (strain SB210).